The chain runs to 843 residues: Transmembrane protease serine 7 (843 aa).

Residues M1 to K76 lie on the Cytoplasmic side of the membrane. Residues A27–K67 form a disordered region. Residues G56 to K67 show a composition bias toward basic residues. The chain crosses the membrane as a helical; Signal-anchor for type II membrane protein span at residues I77–L97. The Extracellular segment spans residues Y98–L843. In terms of domain architecture, SEA spans D106 to R234. 12 disulfide bridges follow: C247/C273, C299/C322, C365/C396, C484/C496, C491/C509, C503/C518, C525/C544, C538/C553, C559/C571, C566/C585, C579/C594, and C631/C647. CUB domains follow at residues C247–I360 and C365–S481. 3 consecutive LDL-receptor class A domains span residues P483–V519, F517–T554, and P558–T595. The 235-residue stretch at I606–P840 folds into the Peptidase S1 domain. Residues H646 and D694 each act as charge relay system in the active site. Disulfide bonds link C730/C796 and C762/C775. S790 (charge relay system) is an active-site residue.

Belongs to the peptidase S1 family. As to quaternary structure, forms a heterodimer with SERPINA5. N-glycosylated. Expressed in brain, ovary, testis, salivary gland, trachea and lung.

The protein resides in the cell membrane. Serine protease which preferentially hydrolyzes peptides with Arg at the P1 position. This is Transmembrane protease serine 7 (TMPRSS7) from Homo sapiens (Human).